The following is a 115-amino-acid chain: Large ribosomal subunit protein bL20 (115 aa).

It belongs to the bacterial ribosomal protein bL20 family.

Its function is as follows. Binds directly to 23S ribosomal RNA and is necessary for the in vitro assembly process of the 50S ribosomal subunit. It is not involved in the protein synthesizing functions of that subunit. The polypeptide is Large ribosomal subunit protein bL20 (Parasynechococcus marenigrum (strain WH8102)).